Consider the following 201-residue polypeptide: 3-isopropylmalate dehydratase small subunit (201 aa).

This sequence belongs to the LeuD family. LeuD type 1 subfamily. As to quaternary structure, heterodimer of LeuC and LeuD.

The enzyme catalyses (2R,3S)-3-isopropylmalate = (2S)-2-isopropylmalate. It participates in amino-acid biosynthesis; L-leucine biosynthesis; L-leucine from 3-methyl-2-oxobutanoate: step 2/4. Catalyzes the isomerization between 2-isopropylmalate and 3-isopropylmalate, via the formation of 2-isopropylmaleate. The chain is 3-isopropylmalate dehydratase small subunit from Shigella boydii serotype 18 (strain CDC 3083-94 / BS512).